We begin with the raw amino-acid sequence, 365 residues long: Phosphate acyltransferase (365 aa).

It belongs to the PlsX family. Homodimer. Probably interacts with PlsY.

It is found in the cytoplasm. The catalysed reaction is a fatty acyl-[ACP] + phosphate = an acyl phosphate + holo-[ACP]. It participates in lipid metabolism; phospholipid metabolism. Catalyzes the reversible formation of acyl-phosphate (acyl-PO(4)) from acyl-[acyl-carrier-protein] (acyl-ACP). This enzyme utilizes acyl-ACP as fatty acyl donor, but not acyl-CoA. In Jannaschia sp. (strain CCS1), this protein is Phosphate acyltransferase.